Reading from the N-terminus, the 1244-residue chain is Putative late blight resistance protein homolog R1A-4 (1244 aa).

Coiled coils occupy residues 411–434 and 526–548; these read RYSD…ESLQ and PRMN…QLLN. The 229-residue stretch at 527–755 folds into the NB-ARC domain; sequence RMNEEIVGFK…ECWEQVANDL (229 aa). 560–567 serves as a coordination point for ATP; that stretch reads GMPGLGKT. 5 LRR repeats span residues 978–1004, 1079–1103, 1127–1150, 1153–1178, and 1213–1237; these read LWNL…VWDM, PIRL…ISAP, LKNL…KVSN, FPQL…AFPN, and ESVV…NFKL.

The protein belongs to the disease resistance NB-LRR family.

It is found in the cytoplasm. The protein resides in the membrane. Functionally, confers resistance to late blight (Phytophthora infestans) races carrying the avirulence gene Avr1. Resistance proteins guard the plant against pathogens that contain an appropriate avirulence protein via an indirect interaction with this avirulence protein. That triggers a defense system including the hypersensitive response, which restricts the pathogen growth. This is Putative late blight resistance protein homolog R1A-4 (R1A-4) from Solanum demissum (Wild potato).